The sequence spans 201 residues: Imidazoleglycerol-phosphate dehydratase (201 aa).

The protein belongs to the imidazoleglycerol-phosphate dehydratase family.

It localises to the cytoplasm. It carries out the reaction D-erythro-1-(imidazol-4-yl)glycerol 3-phosphate = 3-(imidazol-4-yl)-2-oxopropyl phosphate + H2O. The protein operates within amino-acid biosynthesis; L-histidine biosynthesis; L-histidine from 5-phospho-alpha-D-ribose 1-diphosphate: step 6/9. The chain is Imidazoleglycerol-phosphate dehydratase from Synechococcus sp. (strain CC9311).